Here is a 389-residue protein sequence, read N- to C-terminus: S-adenosylmethionine synthase (389 aa).

Histidine 16 contributes to the ATP binding site. Aspartate 18 contacts Mg(2+). Glutamate 44 is a binding site for K(+). 2 residues coordinate L-methionine: glutamate 57 and glutamine 101. The tract at residues 101-111 is flexible loop; the sequence is QSVDIAQGVNE. ATP is bound by residues 168–170, 234–235, aspartate 243, 249–250, alanine 266, and lysine 270; these read DAK, RF, and RK. An L-methionine-binding site is contributed by aspartate 243. Lysine 274 is a binding site for L-methionine.

This sequence belongs to the AdoMet synthase family. In terms of assembly, homotetramer; dimer of dimers. Mg(2+) is required as a cofactor. The cofactor is K(+).

The protein resides in the cytoplasm. It carries out the reaction L-methionine + ATP + H2O = S-adenosyl-L-methionine + phosphate + diphosphate. It participates in amino-acid biosynthesis; S-adenosyl-L-methionine biosynthesis; S-adenosyl-L-methionine from L-methionine: step 1/1. Catalyzes the formation of S-adenosylmethionine (AdoMet) from methionine and ATP. The overall synthetic reaction is composed of two sequential steps, AdoMet formation and the subsequent tripolyphosphate hydrolysis which occurs prior to release of AdoMet from the enzyme. The chain is S-adenosylmethionine synthase from Magnetococcus marinus (strain ATCC BAA-1437 / JCM 17883 / MC-1).